The sequence spans 600 residues: Adenine deaminase (600 aa).

It belongs to the metallo-dependent hydrolases superfamily. Adenine deaminase family. It depends on Mn(2+) as a cofactor.

It catalyses the reaction adenine + H2O + H(+) = hypoxanthine + NH4(+). This is Adenine deaminase from Bradyrhizobium sp. (strain BTAi1 / ATCC BAA-1182).